The sequence spans 636 residues: Threonine--tRNA ligase (636 aa).

One can recognise a TGS domain in the interval 1-61 (MPVITLPDGS…TQDASLQLIT (61 aa)). The interval 243–534 (DHRKIGKTLD…LIEEFTGKFP (292 aa)) is catalytic. Zn(2+) is bound by residues Cys-334, His-385, and His-511.

Belongs to the class-II aminoacyl-tRNA synthetase family. As to quaternary structure, homodimer. Zn(2+) serves as cofactor.

It is found in the cytoplasm. The catalysed reaction is tRNA(Thr) + L-threonine + ATP = L-threonyl-tRNA(Thr) + AMP + diphosphate + H(+). Its function is as follows. Catalyzes the attachment of threonine to tRNA(Thr) in a two-step reaction: L-threonine is first activated by ATP to form Thr-AMP and then transferred to the acceptor end of tRNA(Thr). Also edits incorrectly charged L-seryl-tRNA(Thr). The protein is Threonine--tRNA ligase of Colwellia psychrerythraea (strain 34H / ATCC BAA-681) (Vibrio psychroerythus).